We begin with the raw amino-acid sequence, 52 residues long: Large ribosomal subunit protein bL33 (52 aa).

The protein belongs to the bacterial ribosomal protein bL33 family.

The polypeptide is Large ribosomal subunit protein bL33 (Chlamydia trachomatis serovar A (strain ATCC VR-571B / DSM 19440 / HAR-13)).